A 1469-amino-acid chain; its full sequence is snRNA-activating protein complex subunit 4 (1469 aa).

Residues 16–82 (ELERILDPGS…DPKDKTLPED (67 aa)) form a disordered region. Over residues 24-36 (GSSGSHVEISESS) the composition is skewed to low complexity. Positions 37-53 (LESDSEADSLPSEDLDP) are enriched in acidic residues. S68 is subject to Phosphoserine. The tract at residues 84–133 (ETCLQLNMVYQEVIQEKLAEANLLLAQNREQQEELMRDLAGSKGTKVKDG) is SNAPC5-binding. The Myb-like 1 domain occupies 250–288 (EEALLGNRLDSHDWEKISNINFEGSRSAEEIRKFWQNSE). Residues 289–343 (HPSINKQEWSREEEERLQAIAAAHGHLEWQKIAEELGTSRSAFQCLQKFQQHNKA) enclose the HTH myb-type 1 domain. Residues 317-341 (WQKIAEELGTSRSAFQCLQKFQQHN) constitute a DNA-binding region (H-T-H motif). Residues 344-395 (LKRKEWTEEEDRMLTQLVQEMRVGSHIPYRRIVYYMEGRDSMQLIYRWTKSL) enclose the Myb-like 2 domain. HTH myb-type domains lie at 396–451 (DPGL…HFSL) and 452–503 (KKGR…GKKQ). 2 consecutive DNA-binding regions (H-T-H motif) follow at residues 424-447 (WFKI…LRRL) and 476-499 (WAKI…KIMM). Disordered regions lie at residues 501–558 (KKQG…GDRA), 577–661 (QSTS…QALE), 685–710 (RSCT…SGDS), 834–894 (ASSS…KTVS), 932–981 (PLPH…DKRL), 1001–1051 (PAAS…PSPT), 1121–1167 (AAQG…PAEA), and 1184–1266 (IPEP…GPEK). The span at 503–516 (QGLRRRRRRARHSV) shows a compositional bias: basic residues. The segment covering 519-541 (SSTSSSGSSSGSSGGSSSSSSSS) has biased composition (low complexity). Residue S599 is modified to Phosphoserine. A compositionally biased stretch (polar residues) spans 602-618 (KGSSASQGGSKEASTTA). The residue at position 626 (S626) is a Phosphoserine. The segment covering 932–944 (PLPHTPHGRPAPG) has biased composition (pro residues). Low complexity predominate over residues 951 to 968 (PLSGPGAPAAAKPGTSGS). Residues 1014-1029 (ISVSCPESGLGQSQAP) show a composition bias toward polar residues. Residues 1039 to 1051 (EAPPFLPAAPSPT) are compositionally biased toward pro residues. Phosphothreonine is present on T1157. Residues 1184 to 1195 (IPEPRTSSHADP) are compositionally biased toward basic and acidic residues. At S1224 the chain carries Phosphoserine. Positions 1281 to 1393 (ATQQWLGGQR…QGVRTTLSVP (113 aa)) are SNAPC2-binding. Residues S1398, S1400, and S1440 each carry the phosphoserine modification. The interval 1430–1449 (APDSGKCSASSCLDTSNDPD) is disordered. Residues 1436–1445 (CSASSCLDTS) show a composition bias toward polar residues.

In terms of assembly, part of the SNAPc complex composed of 5 subunits: SNAPC1, SNAPC2, SNAPC3, SNAPC4 and SNAPC5. SNAPC4 interacts with SNAPC1, SNAPC2, SNAPC5, BRF2 and TBP.

The protein resides in the nucleus. Its function is as follows. Part of the SNAPc complex required for the transcription of both RNA polymerase II and III small-nuclear RNA genes. Binds to the proximal sequence element (PSE), a non-TATA-box basal promoter element common to these 2 types of genes. Recruits TBP and BRF2 to the U6 snRNA TATA box. This Homo sapiens (Human) protein is snRNA-activating protein complex subunit 4.